The following is a 307-amino-acid chain: Streptomycin 6-kinase (307 aa).

133 to 145 (LAGLLNRLHSVPA) is a binding site for streptomycin. Asp201 serves as the catalytic Proton acceptor.

It belongs to the aminoglycoside phosphotransferase family.

It carries out the reaction streptomycin + ATP = streptomycin 6-phosphate + ADP + H(+). The aminoglycoside phosphotransferases achieve inactivation of their antibiotic substrates by phosphorylation. This is Streptomycin 6-kinase (aphD) from Streptomyces griseus.